The primary structure comprises 464 residues: Protein FAM90A5 (464 aa).

Disordered stretches follow at residues 16–42 (RAQT…DPRL), 70–389 (PATL…HDGA), and 415–437 (HSPE…SEAP). Basic and acidic residues-rich tracts occupy residues 74–89 (GKKE…KPRV) and 97–114 (NKDK…DPQR). A compositionally biased stretch (low complexity) spans 180–197 (LASLSPLRKASLSSSSSL).

It belongs to the FAM90 family.

In Homo sapiens (Human), this protein is Protein FAM90A5.